A 364-amino-acid polypeptide reads, in one-letter code: Peptidoglycan transport system permease protein YejB (364 aa).

Helical transmembrane passes span 9-29 (LALM…VIQF), 134-154 (SASL…PLGI), 171-191 (IIII…IVLF), 219-239 (IIDY…SAFA), 283-303 (IVIA…SLLI), and 325-345 (YPIV…VGLL). The ABC transmembrane type-1 domain occupies 131–350 (LPVSASLGFW…VVGLLSDLIY (220 aa)).

It belongs to the binding-protein-dependent transport system permease family. The complex is composed of one ATP-binding protein (YejF), two transmembrane proteins (YejB and YejE) and a solute-binding protein (YepA or YejA).

Its subcellular location is the cell inner membrane. Part of the ABC transporter complex YejBEF-YepA involved in the uptake of muropeptides, the breakdown products of cell wall peptidoglycan. The import of muropeptides into the cell enables peptidoglycan recycling, which is vital for cell wall integrity in this bacterium. Is also probably part of the ABC transporter complex YejABEF, which is likely involved in broad-spectrum peptide import. Responsible for the translocation of the substrate across the membrane. In Agrobacterium fabrum (strain C58 / ATCC 33970) (Agrobacterium tumefaciens (strain C58)), this protein is Peptidoglycan transport system permease protein YejB.